The following is a 72-amino-acid chain: PI-stichotoxin-Hmg3d (72 aa).

Residues 1-14 (GFYFRSIQGFYFKR) form the signal peptide. In terms of domain architecture, BPTI/Kunitz inhibitor spans 20–70 (CSEPKKVGRCRGSFPRFYFDSETGKCTPFIYGGCGGNGNNFETLRRCRAIC). 3 cysteine pairs are disulfide-bonded: C20/C70, C29/C53, and C45/C66.

The protein belongs to the venom Kunitz-type family. Sea anemone type 2 potassium channel toxin subfamily.

It localises to the secreted. The protein resides in the nematocyst. Functionally, serine protease inhibitor that inhibits trypsin (Ki=50 nM). This protease exhibits a pronounced neuroprotective activity on Alzheimer's disease model. It enhances cell viability by 39.4% when neuroblastoma cells are in presence of the toxin component beta-amyloid, but has no effect when these cells are in presence of 6-OHDA. It induces an effective decrease of reactive oxygen species (ROS) level in the cells treated with oxidative stress inducers. It also protects these cells by inhibiting ATP-induced purinoceptor activation. Its binding affinity to P2RX7 is moderate (Kd=43.3 uM). In Heteractis magnifica (Magnificent sea anemone), this protein is PI-stichotoxin-Hmg3d.